The primary structure comprises 411 residues: LL-diaminopimelate aminotransferase 1 (411 aa).

Substrate-binding residues include Y15 and G42. Pyridoxal 5'-phosphate contacts are provided by residues Y72, 108–109 (SK), Y132, N187, Y218, and 246–248 (SFS). Substrate contacts are provided by K109, Y132, and N187. K249 is modified (N6-(pyridoxal phosphate)lysine). Residues R257 and N292 each coordinate pyridoxal 5'-phosphate. Substrate is bound by residues N292 and R388.

This sequence belongs to the class-I pyridoxal-phosphate-dependent aminotransferase family. LL-diaminopimelate aminotransferase subfamily. As to quaternary structure, homodimer. The cofactor is pyridoxal 5'-phosphate.

It catalyses the reaction (2S,6S)-2,6-diaminopimelate + 2-oxoglutarate = (S)-2,3,4,5-tetrahydrodipicolinate + L-glutamate + H2O + H(+). It functions in the pathway amino-acid biosynthesis; L-lysine biosynthesis via DAP pathway; LL-2,6-diaminopimelate from (S)-tetrahydrodipicolinate (aminotransferase route): step 1/1. Involved in the synthesis of meso-diaminopimelate (m-DAP or DL-DAP), required for both lysine and peptidoglycan biosynthesis. Catalyzes the direct conversion of tetrahydrodipicolinate to LL-diaminopimelate. This chain is LL-diaminopimelate aminotransferase 1, found in Nostoc sp. (strain PCC 7120 / SAG 25.82 / UTEX 2576).